The following is a 1106-amino-acid chain: Carbamoyl phosphate synthase large chain (1106 aa).

The segment at 1–402 (MPRRQDLNSV…ALQKAMRSLE (402 aa)) is carboxyphosphate synthetic domain. ATP is bound by residues arginine 129, arginine 169, glycine 175, glycine 176, glutamate 208, isoleucine 210, glutamate 215, glycine 241, valine 242, histidine 243, glutamine 285, and glutamate 299. One can recognise an ATP-grasp 1 domain in the interval 133 to 328 (KGVVERCGAE…IAKIATKLSL (196 aa)). Mg(2+) contacts are provided by glutamine 285, glutamate 299, and asparagine 301. Residues glutamine 285, glutamate 299, and asparagine 301 each coordinate Mn(2+). The segment at 403–550 (QKGSAFSFAR…YHYSSYDRET (148 aa)) is oligomerization domain. The carbamoyl phosphate synthetic domain stretch occupies residues 551-953 (EVAPHEKPSV…AFAKAQAAAG (403 aa)). The region spanning 681–872 (ARVLTEAGLR…MAKAAALIGT (192 aa)) is the ATP-grasp 2 domain. ATP contacts are provided by arginine 717, lysine 756, leucine 758, glutamate 763, glycine 788, isoleucine 789, histidine 790, serine 791, glutamine 831, and glutamate 843. Mg(2+) contacts are provided by glutamine 831, glutamate 843, and asparagine 845. Mn(2+) is bound by residues glutamine 831, glutamate 843, and asparagine 845. Residues 954-1106 (GPLPTSGSLF…ERAAQEASRD (153 aa)) form the MGS-like domain. The segment at 954–1106 (GPLPTSGSLF…ERAAQEASRD (153 aa)) is allosteric domain.

This sequence belongs to the CarB family. In terms of assembly, composed of two chains; the small (or glutamine) chain promotes the hydrolysis of glutamine to ammonia, which is used by the large (or ammonia) chain to synthesize carbamoyl phosphate. Tetramer of heterodimers (alpha,beta)4. The cofactor is Mg(2+). Mn(2+) serves as cofactor.

The enzyme catalyses hydrogencarbonate + L-glutamine + 2 ATP + H2O = carbamoyl phosphate + L-glutamate + 2 ADP + phosphate + 2 H(+). It catalyses the reaction hydrogencarbonate + NH4(+) + 2 ATP = carbamoyl phosphate + 2 ADP + phosphate + 2 H(+). The protein operates within amino-acid biosynthesis; L-arginine biosynthesis; carbamoyl phosphate from bicarbonate: step 1/1. Its pathway is pyrimidine metabolism; UMP biosynthesis via de novo pathway; (S)-dihydroorotate from bicarbonate: step 1/3. Functionally, large subunit of the glutamine-dependent carbamoyl phosphate synthetase (CPSase). CPSase catalyzes the formation of carbamoyl phosphate from the ammonia moiety of glutamine, carbonate, and phosphate donated by ATP, constituting the first step of 2 biosynthetic pathways, one leading to arginine and/or urea and the other to pyrimidine nucleotides. The large subunit (synthetase) binds the substrates ammonia (free or transferred from glutamine from the small subunit), hydrogencarbonate and ATP and carries out an ATP-coupled ligase reaction, activating hydrogencarbonate by forming carboxy phosphate which reacts with ammonia to form carbamoyl phosphate. This chain is Carbamoyl phosphate synthase large chain, found in Kocuria rhizophila (strain ATCC 9341 / DSM 348 / NBRC 103217 / DC2201).